Consider the following 428-residue polypeptide: G2/mitotic-specific cyclin-B (428 aa).

This sequence belongs to the cyclin family. Cyclin AB subfamily. In terms of assembly, interacts with the CDC2 protein kinase to form a serine/threonine kinase holoenzyme complex also known as maturation promoting factor (MPF). The cyclin subunit imparts substrate specificity to the complex.

Functionally, essential for the control of the cell cycle at the G2/M (mitosis) transition. The polypeptide is G2/mitotic-specific cyclin-B (Spisula solidissima (Atlantic surf-clam)).